Here is a 327-residue protein sequence, read N- to C-terminus: tRNA dimethylallyltransferase (327 aa).

14–21 is a binding site for ATP; the sequence is GPTASGKT. 16 to 21 serves as a coordination point for substrate; the sequence is TASGKT. Interaction with substrate tRNA stretches follow at residues 39–42 and 163–167; these read DSAL and QRIQR.

This sequence belongs to the IPP transferase family. As to quaternary structure, monomer. Mg(2+) serves as cofactor.

The enzyme catalyses adenosine(37) in tRNA + dimethylallyl diphosphate = N(6)-dimethylallyladenosine(37) in tRNA + diphosphate. Its function is as follows. Catalyzes the transfer of a dimethylallyl group onto the adenine at position 37 in tRNAs that read codons beginning with uridine, leading to the formation of N6-(dimethylallyl)adenosine (i(6)A). In Xanthomonas axonopodis pv. citri (strain 306), this protein is tRNA dimethylallyltransferase.